The chain runs to 253 residues: Pupal cuticle protein (253 aa).

Positions 1-18 (MKSMIVVACLALACGAHA) are cleaved as a signal peptide. Residues 54–66 (LQQASKNNPNPND) show a composition bias toward polar residues. A disordered region spans residues 54–74 (LQQASKNNPNPNDDGSYDPRW). Repeat copies occupy residues 97-100 (AAPA), 115-118 (AAPA), and 154-157 (AAPA). A compositionally biased stretch (low complexity) spans 155–167 (APAQQQWNAPAHQ). Disordered stretches follow at residues 155–178 (APAQ…QDWN) and 187–206 (APAH…APAH). The span at 189–201 (AHQSWNGAPSWQS) shows a compositional bias: polar residues.

In terms of biological role, component of the cuticle of the pupae of silk moth. This is Pupal cuticle protein (PCP) from Bombyx mori (Silk moth).